A 354-amino-acid polypeptide reads, in one-letter code: Rhodopsin (354 aa).

Residues 1-36 (MNGTEGPYFYIPMLNTTGVVRSPYEYPQYYLVNPAA) lie on the Extracellular side of the membrane. Asn2 and Asn15 each carry an N-linked (GlcNAc...) asparagine glycan. The helical transmembrane segment at 37–61 (YAVLGAYMFFLILVGFPINFLTLYV) threads the bilayer. Residues 62–73 (TIEHKKLRTPLN) are Cytoplasmic-facing. Residues 74-96 (YILLNLAVADLFMVFGGFTTTIY) form a helical membrane-spanning segment. At 97–110 (TSMHGYFVLGRLGC) the chain is on the extracellular side. An intrachain disulfide couples Cys110 to Cys187. A helical transmembrane segment spans residues 111-133 (NVEGFSATLGGEIALWSLVVLAI). A 'Ionic lock' involved in activated form stabilization motif is present at residues 134-136 (ERW). The Cytoplasmic portion of the chain corresponds to 134 to 152 (ERWVVVCKPISNFRFGENH). A helical membrane pass occupies residues 153–173 (AIMGVAFTWFMAAACAVPPLF). Residues 174–202 (GWSRYIPEGMQCSCGIDYYTRAEGFNNES) lie on the Extracellular side of the membrane. An N-linked (GlcNAc...) asparagine glycan is attached at Asn200. A helical membrane pass occupies residues 203 to 224 (FVIYMFTCHFCIPLMVVFFCYG). The Cytoplasmic portion of the chain corresponds to 225-252 (RLVCAVKEAAAAQQESETTQRAEREVTR). A helical membrane pass occupies residues 253-274 (MVIIMVVSFLVSWVPYASVAWY). Over 275–286 (IFTHQGSEFGPL) the chain is Extracellular. Residues 287–308 (FMTIPAFFAKSSSIYNPMIYIC) traverse the membrane as a helical segment. Lys296 bears the N6-(retinylidene)lysine mark. At 309–354 (MNKQFRHCMITTLCCGKNPFEEEEGASSTASKTEASSVSSSSVSPA) the chain is on the cytoplasmic side. Residues Cys322 and Cys323 are each lipidated (S-palmitoyl cysteine). A disordered region spans residues 329–354 (EEEEGASSTASKTEASSVSSSSVSPA). Residues 334 to 354 (ASSTASKTEASSVSSSSVSPA) are compositionally biased toward low complexity.

This sequence belongs to the G-protein coupled receptor 1 family. Opsin subfamily. Post-translationally, phosphorylated on some or all of the serine and threonine residues present in the C-terminal region. Contains one covalently linked retinal chromophore.

It is found in the membrane. The protein localises to the cell projection. Its subcellular location is the cilium. It localises to the photoreceptor outer segment. Photoreceptor required for image-forming vision at low light intensity. While most salt water fish species use retinal as chromophore, most freshwater fish use 3-dehydroretinal, or a mixture of retinal and 3-dehydroretinal. Light-induced isomerization of 11-cis to all-trans retinal triggers a conformational change that activates signaling via G-proteins. Subsequent receptor phosphorylation mediates displacement of the bound G-protein alpha subunit by arrestin and terminates signaling. This chain is Rhodopsin (rho), found in Atherina boyeri (Big-scale sand smelt).